A 420-amino-acid polypeptide reads, in one-letter code: UDP-N-acetylglucosamine 1-carboxyvinyltransferase (420 aa).

22 to 23 (KN) contacts phosphoenolpyruvate. UDP-N-acetyl-alpha-D-glucosamine is bound at residue R92. The Proton donor role is filled by C116. A 2-(S-cysteinyl)pyruvic acid O-phosphothioketal modification is found at C116. Residues D306 and I328 each contribute to the UDP-N-acetyl-alpha-D-glucosamine site.

This sequence belongs to the EPSP synthase family. MurA subfamily.

It localises to the cytoplasm. It carries out the reaction phosphoenolpyruvate + UDP-N-acetyl-alpha-D-glucosamine = UDP-N-acetyl-3-O-(1-carboxyvinyl)-alpha-D-glucosamine + phosphate. Its pathway is cell wall biogenesis; peptidoglycan biosynthesis. In terms of biological role, cell wall formation. Adds enolpyruvyl to UDP-N-acetylglucosamine. The chain is UDP-N-acetylglucosamine 1-carboxyvinyltransferase from Blochmanniella floridana.